The primary structure comprises 175 residues: Thioredoxin M-type, chloroplastic (175 aa).

The transit peptide at 1–62 (MALETCLRGW…ARRPSRFVCK (62 aa)) directs the protein to the chloroplast. Residues 63–174 (CKNVVDEVIV…LCTIIDKYIG (112 aa)) enclose the Thioredoxin domain. C98 and C101 are disulfide-bonded.

It belongs to the thioredoxin family. Plant M-type subfamily. As to quaternary structure, forms a complex with heterodimeric ferredoxin-thioredoxin reductase (FTR) and ferredoxin.

It is found in the plastid. The protein resides in the chloroplast. Functionally, participates in various redox reactions through the reversible oxidation of the active center dithiol to a disulfide. The M form is known to activate NADP-malate dehydrogenase. The protein is Thioredoxin M-type, chloroplastic of Triticum aestivum (Wheat).